Consider the following 349-residue polypeptide: Putative inosamine-phosphate amidinotransferase 2 (349 aa).

Belongs to the amidinotransferase family.

It catalyses the reaction 1-amino-1-deoxy-scyllo-inositol 4-phosphate + L-arginine = 1-guanidino-1-deoxy-scyllo-inositol 4-phosphate + L-ornithine. It functions in the pathway antibiotic biosynthesis; streptomycin biosynthesis. Functionally, it is not obvious if strB2 participates in streptomycin biosynthesis as an inosamine-phosphate amidinotransferase. Attempt to measure its activity have failed and the nucleophilic cysteine which is the key residue for amidine transfer is not conserved but replaced by a glycine residue. The polypeptide is Putative inosamine-phosphate amidinotransferase 2 (strB2) (Streptomyces griseus).